A 262-amino-acid polypeptide reads, in one-letter code: Protein CUSTOS (262 aa).

Disordered regions lie at residues 1-79 and 126-262; these read MAAP…LQTT and FTSV…IPAN. The segment covering 9 to 18 has biased composition (low complexity); that stretch reads SDSESSNSSS. Over residues 51-61 the composition is skewed to polar residues; sequence ANSQLSTSQPS. Position 61 is a phosphoserine (Ser-61). At Thr-79 the chain carries Phosphothreonine. Ser-138 bears the Phosphoserine mark. Thr-182 carries the post-translational modification Phosphothreonine. A compositionally biased stretch (basic residues) spans 188–199; that stretch reads KKKRKLKKKAKK. Residues 200–209 are compositionally biased toward low complexity; the sequence is VASVDSAVAA. The span at 210-221 shows a compositional bias: polar residues; it reads TTPTSMATVQKQ. Thr-211 bears the Phosphothreonine mark. The short motif at 236–241 is the Nucleolar localization signal (NLS) element; the sequence is KKKKKA.

Belongs to the CUSTOS family.

It localises to the nucleus envelope. Plays a role in the regulation of Wnt signaling pathway during early development. This chain is Protein CUSTOS, found in Homo sapiens (Human).